We begin with the raw amino-acid sequence, 1412 residues long: MKGLLDLFKQFTPDEHFDAIKIGLASPEKIRSWSFGEVKKPETINYRTFKPERDGLFCAKIFGPIKDYECLCGKYKRLKHRGVICEKCGVEVTQTKVRRDRMGHIDLAAPCAHIWFLKSLPSRLGLVLDMTLRDIERVLYFEAYVVVDPGMTELKKFSIMTEDDYDAKKQQHGDEFVALMGAEGIQKLLAEIDLDVEIERLRGDMTGSELKVKKNSRRLKVMEAFKKSGIKPQWMVMNVLPVLPPDLRPLVPLDGGRFATSDLNDLYRRVINRNNRLARLLELKAPEIIVRNEKRMLQEAVDSLLDNGRRGKAMTGANKRALKSLADMIKGKSGRFRQNLLGKRVDYSGRSVIVVGPTLKLHQCGLPKLMALELFKPFIFSRLEAMGIATTIKAAKKEVESGTPVVWDILEEVIKEHPVMLNRAPTLHRLGIQAFEPVLIEGKAIQLHPLVCAAFNADFDGDQMAVHVPLSIEAQMEARTLMLASNNVLFPANGEPSIVPSQDVVLGLYYATRDRINAKGEGLIFSDVVEVQRALDNGQVEITAKIAVRLTEWTKDKESGEFVPESKLVDTTVGRALLSEILPKGLPFANINKALKKKEISRLINTSFRKCGLKETVVLADKLLQSGFRLATRAGISISIDDMLVPKQKHDLIERAEKEVKEIEQQYVSGLVTAGERYNKVVDIWGKTGDEVGKVMMAQLSKQKVEDRHGKLVDQESFNSIYMMADSGARGSAAQIRQLAGMRGLMAKPDGSIIETPITANFREGLNVLQYFISTHGARKGLADTALKTANSGYLTRRLVDVTQDLVVTEDDCGTDAGIAMRALVEGGEVIESLRDRILGRVTAIEVLHPETQQVVVPAGLMLDEDTLDIVEAAAVDEVKVRTPLTCHTRFGLCAKCYGRDLGRGGLVNAGEAVGVIAAQSIGEPGTQLTMRTFHIGGAASRAAVASSVEAKSDGHIGFNATMRYVTNGKGELVVISRSGEIIISDQHGRERERHKVPYGATLNIKADQQVKAGTVLANWDPLTRPIITEFAGKAKFENVEEGVTVAKQVDEVTGLSTLVVIDPKRRGAAKVVRPQVKLLDAAGNEVKIPGTDHSVTIGFPIGSLVQIRDGQDLAPGEVLARIPVEGQKTRDITGGLPRVAELFEARTPKDKGTLAEMTGTVSFGKETKGKVRLQITDPDGKVYEELVPKEKNILVHEGQVVNKGESIVDGPADPQDILRLLGIEELARYIVDEVQDVYRLQGVKINDKHIEVIVRQMLRRVQIVNPGDTHYILGEQVERASMLDTNDKMRAEGKMIATHADVLLGITKASLSTDSFISAASFQETTRVLTEAAIMGKRDELRGLKENVIVGRLIPAGTGLAFHRARKAKEEMDDAERRSIALQEAEEQALLTPATTAEAVVGEEPAPPPAQ.

Residues cysteine 70, cysteine 72, cysteine 85, and cysteine 88 each contribute to the Zn(2+) site. Positions 458, 460, and 462 each coordinate Mg(2+). The Zn(2+) site is built by cysteine 813, cysteine 887, cysteine 894, and cysteine 897. Positions 1388-1412 (EQALLTPATTAEAVVGEEPAPPPAQ) are disordered. Residues 1393–1405 (TPATTAEAVVGEE) are compositionally biased toward low complexity.

The protein belongs to the RNA polymerase beta' chain family. The RNAP catalytic core consists of 2 alpha, 1 beta, 1 beta' and 1 omega subunit. When a sigma factor is associated with the core the holoenzyme is formed, which can initiate transcription. The cofactor is Mg(2+). It depends on Zn(2+) as a cofactor.

It carries out the reaction RNA(n) + a ribonucleoside 5'-triphosphate = RNA(n+1) + diphosphate. DNA-dependent RNA polymerase catalyzes the transcription of DNA into RNA using the four ribonucleoside triphosphates as substrates. The chain is DNA-directed RNA polymerase subunit beta' from Methylibium petroleiphilum (strain ATCC BAA-1232 / LMG 22953 / PM1).